Consider the following 101-residue polypeptide: Small ribosomal subunit protein uS14 (101 aa).

The protein belongs to the universal ribosomal protein uS14 family. In terms of assembly, part of the 30S ribosomal subunit. Contacts proteins S3 and S10.

Functionally, binds 16S rRNA, required for the assembly of 30S particles and may also be responsible for determining the conformation of the 16S rRNA at the A site. This Shewanella amazonensis (strain ATCC BAA-1098 / SB2B) protein is Small ribosomal subunit protein uS14.